The following is a 659-amino-acid chain: Protein kinase byr2 (659 aa).

The SAM domain occupies 4 to 67; it reads YTSKEVAEWL…LKQRDYLREF (64 aa). Positions 180 to 190 are enriched in low complexity; it reads PKLSSVLPTST. Disordered stretches follow at residues 180 to 209 and 354 to 387; these read PKLSSVLPTSTQKRSVRSNNAKPFESYQRP and SFSPGSSPSFIEQPSPISPTSTTSEDTNTLEEDT. Positions 354-365 are enriched in polar residues; the sequence is SFSPGSSPSFIE. Positions 367-380 are enriched in low complexity; the sequence is PSPISPTSTTSEDT. The Protein kinase domain occupies 394–658; it reads WIRGALIGSG…ASELLSHPFV (265 aa). Residues 400-408 and Lys-423 each bind ATP; that span reads IGSGSFGQV. Asp-522 functions as the Proton acceptor in the catalytic mechanism.

The protein belongs to the protein kinase superfamily. STE Ser/Thr protein kinase family. MAP kinase kinase kinase subfamily. In terms of assembly, interacts with rad24 and rad25; these prevent its translocation to the cell membrane during nitrogen starvation.

The protein resides in the cytoplasm. The protein localises to the cell membrane. It catalyses the reaction L-seryl-[protein] + ATP = O-phospho-L-seryl-[protein] + ADP + H(+). The enzyme catalyses L-threonyl-[protein] + ATP = O-phospho-L-threonyl-[protein] + ADP + H(+). Its function is as follows. Serine/threonine protein kinase involved in conjugation and sporulation. It is thought that it phosphorylates the byr1 protein kinase which itself phosphorylate the spk1 kinase. The sequence is that of Protein kinase byr2 from Schizosaccharomyces pombe (strain 972 / ATCC 24843) (Fission yeast).